The sequence spans 417 residues: MDFKKLDPELWQAIANEEQRQQNNIELIASENIVSKNVLDAQGSVLTNKYAEGYPGRRYYGGCQFIDVVENLAIDRAKQLFGAKYVNVQPHSGSQANAAAYMSLVEPGDTIMGMDLAAGGHLTHGSPVNFSGKTYNFVSYGVDKKTEMLDYDEIARLAREHQPKLIVAGASAYSRIIDFSKFREIADEVGAKLMVDMAHIAGLVAVGLHPNPVPYADITTTTTHKTLRGPRGGMILTNDENLAKKINSNVFPGTQGGPLEHVIAGKAAAFGEALTPEFKEYGEQIIRNTQEMALCFADNEKARLVSNGSDNHLLLLDVRNFGLNGKEAEKLLDQVNITVNKNSIPFETLSPFKTSGIRIGTPAITSRGFNEEDSYQVAKLILTVLANKDDEQVLADVKRQVKELTDAHPIYAEYSIR.

Residues Leu-116 and 120-122 each bind (6S)-5,6,7,8-tetrahydrofolate; that span reads GHL. The residue at position 225 (Lys-225) is an N6-(pyridoxal phosphate)lysine. A (6S)-5,6,7,8-tetrahydrofolate-binding site is contributed by 350–352; that stretch reads SPF.

The protein belongs to the SHMT family. In terms of assembly, homodimer. It depends on pyridoxal 5'-phosphate as a cofactor.

It is found in the cytoplasm. It catalyses the reaction (6R)-5,10-methylene-5,6,7,8-tetrahydrofolate + glycine + H2O = (6S)-5,6,7,8-tetrahydrofolate + L-serine. The protein operates within one-carbon metabolism; tetrahydrofolate interconversion. Its pathway is amino-acid biosynthesis; glycine biosynthesis; glycine from L-serine: step 1/1. Its function is as follows. Catalyzes the reversible interconversion of serine and glycine with tetrahydrofolate (THF) serving as the one-carbon carrier. This reaction serves as the major source of one-carbon groups required for the biosynthesis of purines, thymidylate, methionine, and other important biomolecules. Also exhibits THF-independent aldolase activity toward beta-hydroxyamino acids, producing glycine and aldehydes, via a retro-aldol mechanism. This chain is Serine hydroxymethyltransferase, found in Ligilactobacillus salivarius (strain UCC118) (Lactobacillus salivarius).